Here is a 552-residue protein sequence, read N- to C-terminus: Dihydroxy-acid dehydratase (552 aa).

Residue D78 participates in Mg(2+) binding. C119 is a binding site for [2Fe-2S] cluster. The Mg(2+) site is built by D120 and K121. At K121 the chain carries N6-carboxylysine. Residue C191 participates in [2Fe-2S] cluster binding. E442 is a Mg(2+) binding site. Catalysis depends on S468, which acts as the Proton acceptor.

The protein belongs to the IlvD/Edd family. In terms of assembly, homodimer. [2Fe-2S] cluster serves as cofactor. It depends on Mg(2+) as a cofactor.

The catalysed reaction is (2R)-2,3-dihydroxy-3-methylbutanoate = 3-methyl-2-oxobutanoate + H2O. The enzyme catalyses (2R,3R)-2,3-dihydroxy-3-methylpentanoate = (S)-3-methyl-2-oxopentanoate + H2O. It participates in amino-acid biosynthesis; L-isoleucine biosynthesis; L-isoleucine from 2-oxobutanoate: step 3/4. It functions in the pathway amino-acid biosynthesis; L-valine biosynthesis; L-valine from pyruvate: step 3/4. Functions in the biosynthesis of branched-chain amino acids. Catalyzes the dehydration of (2R,3R)-2,3-dihydroxy-3-methylpentanoate (2,3-dihydroxy-3-methylvalerate) into 2-oxo-3-methylpentanoate (2-oxo-3-methylvalerate) and of (2R)-2,3-dihydroxy-3-methylbutanoate (2,3-dihydroxyisovalerate) into 2-oxo-3-methylbutanoate (2-oxoisovalerate), the penultimate precursor to L-isoleucine and L-valine, respectively. This is Dihydroxy-acid dehydratase from Caldicellulosiruptor saccharolyticus (strain ATCC 43494 / DSM 8903 / Tp8T 6331).